Here is a 299-residue protein sequence, read N- to C-terminus: Protoheme IX farnesyltransferase (299 aa).

The next 9 membrane-spanning stretches (helical) occupy residues 25-45 (VVVL…RAGV), 47-67 (WTVL…AAAV), 95-115 (LAAL…LLTF), 119-139 (LAAW…TGFL), 147-167 (IVIG…AVSG), 173-193 (PLLL…ALAI), 218-238 (LHIL…YAIH), 243-263 (LYLL…WALY), and 279-299 (IRYL…PLTL).

Belongs to the UbiA prenyltransferase family. Protoheme IX farnesyltransferase subfamily.

The protein resides in the cell inner membrane. It carries out the reaction heme b + (2E,6E)-farnesyl diphosphate + H2O = Fe(II)-heme o + diphosphate. It functions in the pathway porphyrin-containing compound metabolism; heme O biosynthesis; heme O from protoheme: step 1/1. In terms of biological role, converts heme B (protoheme IX) to heme O by substitution of the vinyl group on carbon 2 of heme B porphyrin ring with a hydroxyethyl farnesyl side group. In Azotobacter vinelandii (strain DJ / ATCC BAA-1303), this protein is Protoheme IX farnesyltransferase.